Reading from the N-terminus, the 218-residue chain is Deoxyribose-phosphate aldolase (218 aa).

The Proton donor/acceptor role is filled by D89. The active-site Schiff-base intermediate with acetaldehyde is K152. The Proton donor/acceptor role is filled by K182.

The protein belongs to the DeoC/FbaB aldolase family. DeoC type 1 subfamily.

It localises to the cytoplasm. It carries out the reaction 2-deoxy-D-ribose 5-phosphate = D-glyceraldehyde 3-phosphate + acetaldehyde. The protein operates within carbohydrate degradation; 2-deoxy-D-ribose 1-phosphate degradation; D-glyceraldehyde 3-phosphate and acetaldehyde from 2-deoxy-alpha-D-ribose 1-phosphate: step 2/2. Catalyzes a reversible aldol reaction between acetaldehyde and D-glyceraldehyde 3-phosphate to generate 2-deoxy-D-ribose 5-phosphate. In Corynebacterium diphtheriae (strain ATCC 700971 / NCTC 13129 / Biotype gravis), this protein is Deoxyribose-phosphate aldolase.